Reading from the N-terminus, the 198-residue chain is Recombination protein RecR (198 aa).

The C4-type zinc finger occupies 58–73 (CSVCNNLTEKDPCDFC). A Toprim domain is found at 81 to 175 (NLICVVESPK…KVTRIAHGLP (95 aa)).

This sequence belongs to the RecR family.

May play a role in DNA repair. It seems to be involved in an RecBC-independent recombinational process of DNA repair. It may act with RecF and RecO. This Halothermothrix orenii (strain H 168 / OCM 544 / DSM 9562) protein is Recombination protein RecR.